A 232-amino-acid chain; its full sequence is Biosynthetic peptidoglycan transglycosylase (232 aa).

The chain crosses the membrane as a helical span at residues 14–34 (AAVALVLLYQLWIFAHVLWWI).

Belongs to the glycosyltransferase 51 family.

Its subcellular location is the cell inner membrane. It catalyses the reaction [GlcNAc-(1-&gt;4)-Mur2Ac(oyl-L-Ala-gamma-D-Glu-L-Lys-D-Ala-D-Ala)](n)-di-trans,octa-cis-undecaprenyl diphosphate + beta-D-GlcNAc-(1-&gt;4)-Mur2Ac(oyl-L-Ala-gamma-D-Glu-L-Lys-D-Ala-D-Ala)-di-trans,octa-cis-undecaprenyl diphosphate = [GlcNAc-(1-&gt;4)-Mur2Ac(oyl-L-Ala-gamma-D-Glu-L-Lys-D-Ala-D-Ala)](n+1)-di-trans,octa-cis-undecaprenyl diphosphate + di-trans,octa-cis-undecaprenyl diphosphate + H(+). The protein operates within cell wall biogenesis; peptidoglycan biosynthesis. Peptidoglycan polymerase that catalyzes glycan chain elongation from lipid-linked precursors. The chain is Biosynthetic peptidoglycan transglycosylase from Thiobacillus denitrificans (strain ATCC 25259 / T1).